Here is a 554-residue protein sequence, read N- to C-terminus: Valerianol synthase TPS1A (554 aa).

2 residues coordinate Mg(2+): D307 and D311. The DDXXD motif signature appears at 326–330 (VQRWD). D452, S456, and E460 together coordinate Mg(2+).

This sequence belongs to the terpene synthase family. Mg(2+) is required as a cofactor. In terms of tissue distribution, expressed in flowers.

The catalysed reaction is (2E,6E)-farnesyl diphosphate + H2O = valerianol + diphosphate. It functions in the pathway secondary metabolite biosynthesis; terpenoid biosynthesis. Terpene synthase that catalyzes the biosynthesis of the terpene valerianol, which is a volatile compound of floral scent. In Camellia hiemalis (Camellia), this protein is Valerianol synthase TPS1A.